We begin with the raw amino-acid sequence, 936 residues long: Isoleucine--tRNA ligase (936 aa).

A 'HIGH' region motif is present at residues 58–68; sequence PYANGRAHLGT. Glutamate 561 lines the L-isoleucyl-5'-AMP pocket. The 'KMSKS' region motif lies at 602 to 606; that stretch reads KMSKS. Lysine 605 lines the ATP pocket. Residues cysteine 899, cysteine 902, cysteine 919, and cysteine 922 each coordinate Zn(2+).

The protein belongs to the class-I aminoacyl-tRNA synthetase family. IleS type 1 subfamily. As to quaternary structure, monomer. Zn(2+) is required as a cofactor.

It localises to the cytoplasm. It carries out the reaction tRNA(Ile) + L-isoleucine + ATP = L-isoleucyl-tRNA(Ile) + AMP + diphosphate. Catalyzes the attachment of isoleucine to tRNA(Ile). As IleRS can inadvertently accommodate and process structurally similar amino acids such as valine, to avoid such errors it has two additional distinct tRNA(Ile)-dependent editing activities. One activity is designated as 'pretransfer' editing and involves the hydrolysis of activated Val-AMP. The other activity is designated 'posttransfer' editing and involves deacylation of mischarged Val-tRNA(Ile). This chain is Isoleucine--tRNA ligase, found in Coxiella burnetii (strain CbuK_Q154) (Coxiella burnetii (strain Q154)).